The following is a 489-amino-acid chain: Adenylosuccinate synthetase 2, chloroplastic (489 aa).

Residues Met1–Ser54 constitute a chloroplast transit peptide. GTP contacts are provided by residues Gly76–Lys82 and Gly104–Thr106. Asp77 (proton acceptor) is an active-site residue. Asp77 and Gly104 together coordinate Mg(2+). IMP contacts are provided by residues Asp77–Lys80, Asn102–His105, Thr194, Arg208, Gln288, Thr303, and Arg367. The active-site Proton donor is His105. Thr363–Arg369 lines the substrate pocket. Residues Arg369, Lys395–Asp397, and Gly478–Gly480 contribute to the GTP site.

This sequence belongs to the adenylosuccinate synthetase family. As to quaternary structure, homodimer. It depends on Mg(2+) as a cofactor.

Its subcellular location is the plastid. It is found in the chloroplast. It catalyses the reaction IMP + L-aspartate + GTP = N(6)-(1,2-dicarboxyethyl)-AMP + GDP + phosphate + 2 H(+). It functions in the pathway purine metabolism; AMP biosynthesis via de novo pathway; AMP from IMP: step 1/2. Functionally, plays an important role in the de novo pathway and in the salvage pathway of purine nucleotide biosynthesis. Catalyzes the first committed step in the biosynthesis of AMP from IMP. The sequence is that of Adenylosuccinate synthetase 2, chloroplastic from Sorghum bicolor (Sorghum).